An 892-amino-acid chain; its full sequence is Ataxin-7 (892 aa).

A compositionally biased stretch (basic and acidic residues) spans 1 to 15 (MSERAADDVRGEPRR). Disordered stretches follow at residues 1–74 (MSER…SAAA) and 195–247 (SKGG…SRVP). Low complexity predominate over residues 16-38 (AAAAAGGAAAAAARQQQQQQQQQ). Residues 39-55 (QPPPPQPQRQQHPPPPP) are compositionally biased toward pro residues. The segment covering 195 to 222 (SKGGSASGSNRSSSGGVLSASSSSSKLL) has biased composition (low complexity). Residue K257 forms a Glycyl lysine isopeptide (Lys-Gly) (interchain with G-Cter in SUMO); alternate linkage. K257 participates in a covalent cross-link: Glycyl lysine isopeptide (Lys-Gly) (interchain with G-Cter in SUMO2); alternate. Disordered stretches follow at residues 298–328 (PTLP…NSNN), 389–505 (HKNK…ESVE), 616–730 (KSVP…SSHS), and 818–892 (SHGS…KARP). Composition is skewed to basic and acidic residues over residues 318 to 327 (LEKKPEDNSN) and 389 to 403 (HKNK…RHPD). Positions 334 to 401 (KRLSEREFDP…KTREKELIRH (68 aa)) constitute an SCA7 domain. 3 stretches are compositionally biased toward pro residues: residues 405-419 (QQPP…PAPP), 448-458 (HTPSLPRPPGC), and 468-483 (IDPP…PLPA). Residues 493–502 (EEGEGDDKEE) show a composition bias toward acidic residues. Residues 616-629 (KSVPAHGTTLNAQP) show a composition bias toward polar residues. Over residues 640-669 (SMQSRQVSSSSSSPSTPSGLSSVPSSPMSR) the composition is skewed to low complexity. Over residues 670–680 (KPQKLKSSKSL) the composition is skewed to basic residues. The segment covering 685 to 695 (SSGNSTNCQNA) has biased composition (polar residues). Low complexity-rich tracts occupy residues 716 to 730 (HSSS…SSHS) and 840 to 851 (SPSSSSINNSSS).

This sequence belongs to the ataxin-7 family. In terms of assembly, component of the SAGA transcription coactivator-HAT complex, at least composed of SUPT3H, GCN5L2, TAF5L, TAF6L, SUPT7L, TADA3L, TAD1L, TAF10, TAF12, TRRAP, TAF9 and ATXN7. The STAGA core complex is associated with a subcomplex required for histone deubiquitination composed of ATXN7L3, ENY2 and USP22. Interacts with SORBS1, PSMC1 and CRX. Interacts with TRRAP, GCN5L2 and TAF10. Interacts with alpha tubulin. Proteolytically cleaved by caspase-7 (CASP7). The cleavage may be involved in SCA7 degeneration: the isoform fragments may exert distinct toxic influences that could contribute to selective neurodegeneration. In terms of processing, sumoylation decreases the aggregation propensity and cellular toxicity of forms with an expanded poly-Gln region but has no effect on subcellular location or interaction with components of the STAGA complex. In terms of tissue distribution, isoform a is expressed in CNS, but is expressed predominantly in the peripherical tissues. As to expression, isoform b is expressed in CNS. Also highly expressed in the frontal lobe, skeletal muscle and spinal cord and is expressed at a lower level in the lung, lymphoblast and intestine.

The protein localises to the nucleus. It localises to the nucleolus. The protein resides in the nucleus matrix. It is found in the cytoplasm. Its subcellular location is the cytoskeleton. Its function is as follows. Acts as a component of the SAGA (aka STAGA) transcription coactivator-HAT complex. Mediates the interaction of SAGA complex with the CRX and is involved in CRX-dependent gene activation. Probably involved in tethering the deubiquitination module within the SAGA complex. Necessary for microtubule cytoskeleton stabilization. Involved in neurodegeneration. This chain is Ataxin-7 (ATXN7), found in Homo sapiens (Human).